Here is a 249-residue protein sequence, read N- to C-terminus: Putative protein SNX29P2 (249 aa).

2 disordered regions span residues 109 to 171 (QVTN…SNSW) and 188 to 249 (DVKS…PGFK). Residues 156 to 170 (SPFGPNSNGSQSSNS) show a composition bias toward low complexity. A compositionally biased stretch (acidic residues) spans 193–204 (DDEDVDENEDDV). Polar residues predominate over residues 226–242 (HSVTQAGVQWHDLSSLQ).

The protein belongs to the sorting nexin family.

The chain is Putative protein SNX29P2 (SNX29P2) from Homo sapiens (Human).